The chain runs to 121 residues: MQEKDCIFCKIVRGEVPAKKVYEDDKVLAFHDINPVAPVHILIIPKKHIMGIQTLEPEDECLVGHMFYVARKIAEDLGIAPDENLNKGYRLVFNVGKDAGQSVFHLHLHLIGGREMSWPPG.

An HIT domain is found at 7-121 (IFCKIVRGEV…GGREMSWPPG (115 aa)). The Histidine triad motif motif lies at 105–109 (HLHLH).

This is an uncharacterized protein from Aquifex aeolicus (strain VF5).